Reading from the N-terminus, the 386-residue chain is S-adenosylmethionine synthase (386 aa).

Mg(2+) is bound at residue glutamate 8. Histidine 14 is a binding site for ATP. Glutamate 42 contributes to the K(+) binding site. L-methionine contacts are provided by glutamate 55 and glutamine 98. Residues 166-168 (DGK), 234-237 (SGRF), aspartate 245, 251-252 (RK), alanine 268, lysine 272, and lysine 276 each bind ATP. Aspartate 245 is an L-methionine binding site. Lysine 276 is a binding site for L-methionine.

The protein belongs to the AdoMet synthase family. As to quaternary structure, homotetramer. Mn(2+) is required as a cofactor. Requires Mg(2+) as cofactor. Co(2+) serves as cofactor. It depends on K(+) as a cofactor.

It is found in the cytoplasm. It carries out the reaction L-methionine + ATP + H2O = S-adenosyl-L-methionine + phosphate + diphosphate. It functions in the pathway amino-acid biosynthesis; S-adenosyl-L-methionine biosynthesis; S-adenosyl-L-methionine from L-methionine: step 1/1. Its function is as follows. Catalyzes the formation of S-adenosylmethionine from methionine and ATP. The reaction comprises two steps that are both catalyzed by the same enzyme: formation of S-adenosylmethionine (AdoMet) and triphosphate, and subsequent hydrolysis of the triphosphate. The chain is S-adenosylmethionine synthase (METK) from Ostreococcus tauri.